We begin with the raw amino-acid sequence, 98 residues long: MEQINLNMITAFTIALMGVLTYRSHLMSTLLCLEGMMLSLFILMVLLISHSHMVSMSMAPLILLVFSACEAGVGLALLVTISHTYGNDYVQNLNLLQC.

Transmembrane regions (helical) follow at residues 1–21, 28–48, and 61–81; these read MEQI…GVLT, STLL…VLLI, and LILL…LVTI.

The protein belongs to the complex I subunit 4L family. Core subunit of respiratory chain NADH dehydrogenase (Complex I) which is composed of 45 different subunits.

It is found in the mitochondrion inner membrane. The enzyme catalyses a ubiquinone + NADH + 5 H(+)(in) = a ubiquinol + NAD(+) + 4 H(+)(out). Core subunit of the mitochondrial membrane respiratory chain NADH dehydrogenase (Complex I) which catalyzes electron transfer from NADH through the respiratory chain, using ubiquinone as an electron acceptor. Part of the enzyme membrane arm which is embedded in the lipid bilayer and involved in proton translocation. This Monodelphis domestica (Gray short-tailed opossum) protein is NADH-ubiquinone oxidoreductase chain 4L (MT-ND4L).